The primary structure comprises 360 residues: UPF0324 membrane protein plu2856 (360 aa).

9 consecutive transmembrane segments (helical) span residues 20–42, 47–69, 104–126, 136–155, 167–189, 239–256, 277–299, 304–326, and 333–355; these read LIPG…NIPW, GLGT…YPLL, VGIT…AIWL, QTVI…AIMA, VAVA…PWFY, MIRV…SRYI, WFAV…AAIV, NIDT…VSAI, and PILL…NLGI.

Belongs to the UPF0324 family.

It localises to the cell membrane. The chain is UPF0324 membrane protein plu2856 from Photorhabdus laumondii subsp. laumondii (strain DSM 15139 / CIP 105565 / TT01) (Photorhabdus luminescens subsp. laumondii).